Here is a 217-residue protein sequence, read N- to C-terminus: Adenylate kinase (217 aa).

10–15 provides a ligand contact to ATP; the sequence is GAGKGT. The tract at residues 30 to 59 is NMP; sequence STGDMLRAAVKAGTPLGVEAKKVMDAGGLV. AMP is bound by residues threonine 31, arginine 36, 57-59, 85-88, and glutamine 92; these read GLV and GFPR. The interval 122-159 is LID; that stretch reads GRRAHLASGRTYHVKYNPPKVAGKDDLTGEDLVQRDDD. ATP-binding positions include arginine 123 and 132 to 133; that span reads TY. AMP contacts are provided by arginine 156 and arginine 167. Glycine 203 contacts ATP.

It belongs to the adenylate kinase family. Monomer.

It localises to the cytoplasm. It catalyses the reaction AMP + ATP = 2 ADP. It participates in purine metabolism; AMP biosynthesis via salvage pathway; AMP from ADP: step 1/1. Functionally, catalyzes the reversible transfer of the terminal phosphate group between ATP and AMP. Plays an important role in cellular energy homeostasis and in adenine nucleotide metabolism. The protein is Adenylate kinase of Aromatoleum aromaticum (strain DSM 19018 / LMG 30748 / EbN1) (Azoarcus sp. (strain EbN1)).